The primary structure comprises 879 residues: Levansucrase (879 aa).

An N-terminal signal peptide occupies residues 1-37 (MTKEHKKMYKAGKYWAVATLVSASILMEVGVTTHADA). A run of 7 repeats spans residues 66–81 (DNATSGSTKQESSIAN), 82–97 (DNATSGSTKQESSIAN), 98–113 (DNATSGSTKQESSIAN), 114–129 (DNATSGSTKQESSVAN), 130–145 (DNATSGSTKQESSVAN), 146–161 (DNATSGSTKQESSVAN), and 162–177 (DNATSGSTKQESSVAN). A 7 X 16 AA tandem repeats of D-N-A-T-S-G-S-T-K-Q-E-S-S-[IV]-A-N region spans residues 66-177 (DNATSGSTKQ…STKQESSVAN (112 aa)). Polar residues-rich tracts occupy residues 66–180 (DNAT…NDTK) and 189–213 (NTSNTENDNSQLKQTNNEQPSAATQ). The segment at 66 to 213 (DNATSGSTKQ…NNEQPSAATQ (148 aa)) is disordered. Sucrose contacts are provided by Trp-311, Asp-312, and Ser-382. Asp-312 serves as the catalytic Nucleophile. Residue Asp-460 participates in Ca(2+) binding. The sucrose site is built by Arg-465 and Asp-466. Residues Gln-491, Leu-528, Asn-530, and Asp-562 each coordinate Ca(2+). Glu-563 is a binding site for sucrose. The Proton donor/acceptor role is filled by Glu-565. Arg-583 contacts sucrose. A disordered region spans residues 743–830 (SSGLGLKPHQ…TPAKPVQAGQ (88 aa)). The segment covering 754–821 (VNPSQPTTPA…KPVNPSQPTT (68 aa)) has biased composition (polar residues). The short motif at 841 to 845 (LPQTG) is the LPXTG sorting signal element. Thr-844 carries the pentaglycyl murein peptidoglycan amidated threonine modification. Positions 845-879 (GENNSQSQTMSFIGILLAMFGSLLGFLGIKKRRND) are cleaved as a propeptide — removed by sortase.

It belongs to the glycosyl hydrolase 68 family.

It localises to the secreted. Its subcellular location is the cell wall. The enzyme catalyses [6)-beta-D-fructofuranosyl-(2-&gt;](n) alpha-D-glucopyranoside + sucrose = [6)-beta-D-fructofuranosyl-(2-&gt;](n+1) alpha-D-glucopyranoside + D-glucose. Its activity is regulated as follows. Ca(2+) may play an important structural role and promote stability of levansucrase. Functionally, fructosyltransferase that catalyzes the polymerization of the fructose moiety of sucrose to produce levan polymer and the fructo-oligosaccharide (FOS) 1-kestose. Also displays sucrose hydrolase activity. The chain is Levansucrase from Fructilactobacillus sanfranciscensis (Lactobacillus sanfranciscensis).